The primary structure comprises 118 residues: Large ribosomal subunit protein uL18 (118 aa).

The interval 1 to 24 is disordered; it reads MISKPDKNKIRQKRHRRVRGKLSG. The span at 10–20 shows a compositional bias: basic residues; it reads IRQKRHRRVRG.

This sequence belongs to the universal ribosomal protein uL18 family. Part of the 50S ribosomal subunit; part of the 5S rRNA/L5/L18/L25 subcomplex. Contacts the 5S and 23S rRNAs.

Its function is as follows. This is one of the proteins that bind and probably mediate the attachment of the 5S RNA into the large ribosomal subunit, where it forms part of the central protuberance. This chain is Large ribosomal subunit protein uL18, found in Streptococcus mutans serotype c (strain ATCC 700610 / UA159).